Consider the following 461-residue polypeptide: Peptidyl-prolyl cis-trans isomerase-like 4 (461 aa).

Residues 1–171 (MSVLLETSLG…KDIRIRHTVI (171 aa)) enclose the PPIase cyclophilin-type domain. Positions 205–234 (EELDDNMDEESMEKLRREREARAQALTLEM) form a coiled coil. The RRM domain occupies 248–326 (NVLFVCKLNP…HRIHVDFSQS (79 aa)). The segment at 341–461 (KRSGQRGGFG…DERYRERRRR (121 aa)) is disordered. Basic and acidic residues-rich tracts occupy residues 365–384 (DNAR…GDKA) and 398–461 (SNRD…RRRR).

The protein belongs to the cyclophilin-type PPIase family. PPIL4 subfamily.

It is found in the nucleus. The enzyme catalyses [protein]-peptidylproline (omega=180) = [protein]-peptidylproline (omega=0). In terms of biological role, PPIases accelerate the folding of proteins. It catalyzes the cis-trans isomerization of proline imidic peptide bonds in oligopeptides. The polypeptide is Peptidyl-prolyl cis-trans isomerase-like 4 (cyp6) (Aspergillus oryzae (strain ATCC 42149 / RIB 40) (Yellow koji mold)).